The following is a 467-amino-acid chain: Actinorhodin polyketide putative beta-ketoacyl synthase 1 (467 aa).

Residues 1-35 (MPLDAAPVDPASRGPVSAFEPPSSHGADDDDDHRT) form a disordered region. Residues 45 to 459 (KRRVVITGVG…GFQSAMVLRD (415 aa)) form the Ketosynthase family 3 (KS3) domain. Catalysis depends on for beta-ketoacyl synthase activity residues cysteine 212, histidine 352, and histidine 389.

It belongs to the thiolase-like superfamily. Beta-ketoacyl-ACP synthases family.

It functions in the pathway antibiotic biosynthesis; actinorhodin biosynthesis. This chain is Actinorhodin polyketide putative beta-ketoacyl synthase 1, found in Streptomyces coelicolor (strain ATCC BAA-471 / A3(2) / M145).